A 342-amino-acid polypeptide reads, in one-letter code: Anthranilate phosphoribosyltransferase (342 aa).

5-phospho-alpha-D-ribose 1-diphosphate is bound by residues G79, 82–83 (GD), T87, 89–92 (NVST), 107–115 (KHGNRAATS), and S119. G79 contacts anthranilate. Mg(2+) is bound at residue S91. Anthranilate is bound at residue N110. Residue R165 participates in anthranilate binding. 2 residues coordinate Mg(2+): D224 and E225.

This sequence belongs to the anthranilate phosphoribosyltransferase family. In terms of assembly, homodimer. Mg(2+) serves as cofactor.

It catalyses the reaction N-(5-phospho-beta-D-ribosyl)anthranilate + diphosphate = 5-phospho-alpha-D-ribose 1-diphosphate + anthranilate. It functions in the pathway amino-acid biosynthesis; L-tryptophan biosynthesis; L-tryptophan from chorismate: step 2/5. Catalyzes the transfer of the phosphoribosyl group of 5-phosphorylribose-1-pyrophosphate (PRPP) to anthranilate to yield N-(5'-phosphoribosyl)-anthranilate (PRA). This is Anthranilate phosphoribosyltransferase from Rubrobacter xylanophilus (strain DSM 9941 / JCM 11954 / NBRC 16129 / PRD-1).